The primary structure comprises 337 residues: Nucleotide sugar transporter SLC35D2 (337 aa).

The Cytoplasmic segment spans residues 1 to 27; it reads MTAGGQAEAEGAGGEPGAARLPSRVAR. The helical transmembrane segment at 28-48 threads the bilayer; the sequence is LLSALFYGTCSFLIVLVNKAL. At 49-53 the chain is on the extracellular side; it reads LTTYG. The helical transmembrane segment at 54-74 threads the bilayer; the sequence is FPSPIFLGIGQMAATIMILYV. Residues 75–146 are Cytoplasmic-facing; that stretch reads SKLNKIIHFP…IILGKQYSLN (72 aa). The next 2 helical transmembrane spans lie at 147-167 and 168-188; these read IILS…SDLA and FNLE…ANGV. At 189–201 the chain is on the cytoplasmic side; sequence YTKQKMDPKELGK. A helical transmembrane segment spans residues 202-222; it reads YGVLFYNACFMIIPTLIISVS. Topologically, residues 223–237 are extracellular; it reads TGDLQQATEFNQWKN. Residues 238–258 traverse the membrane as a helical segment; that stretch reads VVFILQFLLSCFLGFLLMYST. The Cytoplasmic segment spans residues 259-265; sequence VLCSYYN. The helical transmembrane segment at 266-288 threads the bilayer; sequence SALTTAVVGAIKNVSVAYIGILI. At 289-292 the chain is on the extracellular side; the sequence is GGDY. The chain crosses the membrane as a helical span at residues 293 to 315; it reads IFSLLNFVGLNICMAGGLRYSFL. At 316–337 the chain is on the cytoplasmic side; sequence TLSSQLKPKPVGEENICLDLKS.

It belongs to the TPT transporter family. SLC35D subfamily. In terms of tissue distribution, highly expressed in heart, kidney, small intestine, placenta, lung and peripheral blood leukocyte. Weakly expressed in skeletal muscle and spleen. Not expressed in brain, colon and thymus.

Its subcellular location is the golgi apparatus membrane. The catalysed reaction is UMP(out) + UDP-N-acetyl-alpha-D-glucosamine(in) = UMP(in) + UDP-N-acetyl-alpha-D-glucosamine(out). The enzyme catalyses UMP(out) + UDP-alpha-D-glucose(in) = UMP(in) + UDP-alpha-D-glucose(out). Functionally, nucleotide sugar antiporter transporting UDP-N-acetylglucosamine (UDP-GlcNAc) and UDP-glucose (UDP-Glc) from the cytosol into the lumen of the Golgi in exchange of UMP. By supplying UDP-N-acetylglucosamine, a donor substrate to heparan sulfate synthases, probably takes part in the synthesis of these glycoconjugates. The sequence is that of Nucleotide sugar transporter SLC35D2 from Homo sapiens (Human).